The following is a 504-amino-acid chain: ATP synthase subunit alpha (504 aa).

170–177 (GDRQTGKT) contributes to the ATP binding site.

The protein belongs to the ATPase alpha/beta chains family. As to quaternary structure, F-type ATPases have 2 components, CF(1) - the catalytic core - and CF(0) - the membrane proton channel. CF(1) has five subunits: alpha(3), beta(3), gamma(1), delta(1), epsilon(1). CF(0) has four main subunits: a, b, b' and c.

The protein localises to the cellular thylakoid membrane. It catalyses the reaction ATP + H2O + 4 H(+)(in) = ADP + phosphate + 5 H(+)(out). Functionally, produces ATP from ADP in the presence of a proton gradient across the membrane. The alpha chain is a regulatory subunit. This is ATP synthase subunit alpha from Prochlorococcus marinus (strain MIT 9211).